Reading from the N-terminus, the 628-residue chain is Isoleucine--tRNA ligase (628 aa).

The 'KMSKS' region signature appears at 505-509; it reads KMSKR. Residue Lys-508 coordinates ATP.

The protein belongs to the class-I aminoacyl-tRNA synthetase family.

The enzyme catalyses tRNA(Ile) + L-isoleucine + ATP = L-isoleucyl-tRNA(Ile) + AMP + diphosphate. The polypeptide is Isoleucine--tRNA ligase (Antonospora locustae (Microsporidian parasite)).